Here is a 303-residue protein sequence, read N- to C-terminus: Glycine--tRNA ligase alpha subunit (303 aa).

The protein belongs to the class-II aminoacyl-tRNA synthetase family. Tetramer of two alpha and two beta subunits.

It is found in the cytoplasm. The enzyme catalyses tRNA(Gly) + glycine + ATP = glycyl-tRNA(Gly) + AMP + diphosphate. The polypeptide is Glycine--tRNA ligase alpha subunit (Erwinia tasmaniensis (strain DSM 17950 / CFBP 7177 / CIP 109463 / NCPPB 4357 / Et1/99)).